The chain runs to 549 residues: MFCEQCEQTASGNGCHQWGACGKSPEVNAVQDLLIYCLRGLATVVLKARENHIPTQKMDVFICEALFATMTNVNFNNKSLTEYLKTCINLREKLKQTLEETLNTPPSWSDLSNYQPDWEDSLVTQGETLVHRFISRSSNDLDIISLKLTVLYGLKGVASYTFHAQELGQEDEKVYQFIEDALVKLERTDLSLQEWIDLALKVGEINLRAMELLDAGHTQTYGHPTPTQVPLNPKKGKAILVSGHDIRQLEAILQQTADKDITVYTHGELLPAHGYPKLKQNYPHLYGHYGTAWQNQTKDFAKFPGAIIITTNCLMPPHETYDEKLFTIGPVSYPHLTYLPPTETGIPDYSPAIKKACLMPGFTEETEPRHVMVGFARNTVLSVSDQVIEGVKTGKIRHFFLVGGCDGAKPGRTYYTELVEKVPSDCIVLTLACGKFRFFDKQLGEIEGLPRLMDVGQCNDAYSAIQIALGLANAFNVSVNEIPLSLILSWYEQKAIAVLLTLLYLGIQNIRLGPTLPAFITPNVLQFLQDNYHLQPITTPDEDLAACLN.

Residues Cys-3, Cys-6, Cys-15, and Cys-21 each contribute to the [4Fe-4S] cluster site. 8 residues coordinate hybrid [4Fe-2O-2S] cluster: His-244, Glu-268, Cys-313, Cys-405, Cys-433, Cys-458, Glu-492, and Lys-494. Cys-405 is subject to Cysteine persulfide.

This sequence belongs to the HCP family. [4Fe-4S] cluster is required as a cofactor. The cofactor is hybrid [4Fe-2O-2S] cluster.

It localises to the cytoplasm. The catalysed reaction is A + NH4(+) + H2O = hydroxylamine + AH2 + H(+). In terms of biological role, catalyzes the reduction of hydroxylamine to form NH(3) and H(2)O. The polypeptide is Hydroxylamine reductase (Gloeothece citriformis (strain PCC 7424) (Cyanothece sp. (strain PCC 7424))).